Consider the following 418-residue polypeptide: Glutamyl-tRNA reductase (418 aa).

Residues 49 to 52 (TCNR), Ser-108, 113 to 115 (EPQ), and Gln-119 each bind substrate. Cys-50 acts as the Nucleophile in catalysis. An NADP(+)-binding site is contributed by 188–193 (GAGETI).

It belongs to the glutamyl-tRNA reductase family. Homodimer.

It carries out the reaction (S)-4-amino-5-oxopentanoate + tRNA(Glu) + NADP(+) = L-glutamyl-tRNA(Glu) + NADPH + H(+). Its pathway is porphyrin-containing compound metabolism; protoporphyrin-IX biosynthesis; 5-aminolevulinate from L-glutamyl-tRNA(Glu): step 1/2. In terms of biological role, catalyzes the NADPH-dependent reduction of glutamyl-tRNA(Glu) to glutamate 1-semialdehyde (GSA). The polypeptide is Glutamyl-tRNA reductase (Aliivibrio fischeri (strain ATCC 700601 / ES114) (Vibrio fischeri)).